Reading from the N-terminus, the 523-residue chain is Succinate-semialdehyde dehydrogenase, mitochondrial (523 aa).

Residues 1–35 constitute a mitochondrion transit peptide; that stretch reads MATCFLLRNFCAARPALRPPGRLLREPAGAQRRSY. Position 114 is an N6-acetyllysine; alternate (Lys114). Residue Lys114 is modified to N6-succinyllysine; alternate. N6-succinyllysine occurs at positions 123 and 172. NAD(+) contacts are provided by residues Arg201 and 216–219; that span reads KPAE. Arg201 is a binding site for substrate. Residue Lys253 is modified to N6-acetyllysine; alternate. Position 253 is an N6-succinyllysine; alternate (Lys253). Residue 272–277 coordinates NAD(+); it reads GSTATG. Catalysis depends on Glu294, which acts as the Proton acceptor. Residue Arg322 coordinates substrate. Catalysis depends on Cys328, which acts as the Nucleophile. Residues Cys328 and Cys330 are joined by a disulfide bond. Lys353 is modified (N6-acetyllysine). The residue at position 390 (Lys390) is an N6-succinyllysine. Lys399 carries the N6-acetyllysine modification. Ser486 is a substrate binding site. At Ser487 the chain carries Phosphoserine.

It belongs to the aldehyde dehydrogenase family. In terms of assembly, homotetramer. In terms of tissue distribution, brain, pancreas, heart, liver, skeletal muscle, kidney. Lower in spleen, lung, kidney and testis.

The protein localises to the mitochondrion. It catalyses the reaction succinate semialdehyde + NAD(+) + H2O = succinate + NADH + 2 H(+). Its pathway is amino-acid degradation; 4-aminobutanoate degradation. Redox-regulated. Inhibited under oxydizing conditions. Catalyzes one step in the degradation of the inhibitory neurotransmitter gamma-aminobutyric acid (GABA). The sequence is that of Succinate-semialdehyde dehydrogenase, mitochondrial (Aldh5a1) from Rattus norvegicus (Rat).